Here is a 428-residue protein sequence, read N- to C-terminus: Glutamate-1-semialdehyde 2,1-aminomutase (428 aa).

Residue K267 is modified to N6-(pyridoxal phosphate)lysine.

It belongs to the class-III pyridoxal-phosphate-dependent aminotransferase family. HemL subfamily. In terms of assembly, homodimer. Pyridoxal 5'-phosphate is required as a cofactor.

It localises to the cytoplasm. The enzyme catalyses (S)-4-amino-5-oxopentanoate = 5-aminolevulinate. It participates in porphyrin-containing compound metabolism; protoporphyrin-IX biosynthesis; 5-aminolevulinate from L-glutamyl-tRNA(Glu): step 2/2. Its pathway is porphyrin-containing compound metabolism; chlorophyll biosynthesis. This chain is Glutamate-1-semialdehyde 2,1-aminomutase, found in Prochlorococcus marinus (strain MIT 9303).